The primary structure comprises 256 residues: Signal peptidase I (256 aa).

Catalysis depends on residues Ser32 and Lys75.

It belongs to the peptidase S26 family.

It catalyses the reaction Cleavage of hydrophobic, N-terminal signal or leader sequences from secreted and periplasmic proteins.. The polypeptide is Signal peptidase I (lepB) (Aquifex aeolicus (strain VF5)).